The following is a 126-amino-acid chain: Histone H2B type 2-E (126 aa).

The segment covering 1 to 12 has biased composition (low complexity); that stretch reads MPEPAKSAPAPK. A disordered region spans residues 1 to 32; it reads MPEPAKSAPAPKKGSKKAVTKAQKKDGKKRKR. N-acetylproline is present on Pro2. At Glu3 the chain carries ADP-ribosyl glutamic acid. Position 6 is an N6-(2-hydroxyisobutyryl)lysine; alternate (Lys6). Lys6 is modified (N6-(beta-hydroxybutyryl)lysine; alternate). At Lys6 the chain carries N6-acetyllysine; alternate. N6-butyryllysine; alternate is present on Lys6. Lys6 carries the post-translational modification N6-crotonyllysine; alternate. An N6-lactoyllysine; alternate modification is found at Lys6. A Glycyl lysine isopeptide (Lys-Gly) (interchain with G-Cter in SUMO2); alternate cross-link involves residue Lys6. Ser7 is modified (ADP-ribosylserine). Residue Lys12 is modified to N6-(beta-hydroxybutyryl)lysine; alternate. Residues Lys12 and Lys13 each carry the N6-acetyllysine; alternate modification. 2 positions are modified to N6-crotonyllysine; alternate: Lys12 and Lys13. An N6-lactoyllysine; alternate modification is found at Lys12. N6-(2-hydroxyisobutyryl)lysine; alternate is present on Lys13. Ser15 carries the post-translational modification Phosphoserine; by STK4/MST1. Residues Lys16, Lys17, Lys21, and Lys24 each carry the N6-acetyllysine; alternate modification. N6-crotonyllysine; alternate occurs at positions 16, 17, 21, and 24. N6-lactoyllysine; alternate is present on residues Lys16, Lys17, Lys21, and Lys24. The residue at position 17 (Lys17) is an N6-glutaryllysine; alternate. An N6-(2-hydroxyisobutyryl)lysine; alternate mark is found at Lys21 and Lys24. Lys21 carries the N6-(beta-hydroxybutyryl)lysine; alternate modification. Lys21 bears the N6-butyryllysine; alternate mark. Lys21 is covalently cross-linked (Glycyl lysine isopeptide (Lys-Gly) (interchain with G-Cter in SUMO2); alternate). Residue Lys25 is modified to N6-(2-hydroxyisobutyryl)lysine. Position 35 is an N6-(2-hydroxyisobutyryl)lysine; alternate (Lys35). Lys35 bears the N6-(beta-hydroxybutyryl)lysine; alternate mark. Residue Lys35 is modified to N6-crotonyllysine; alternate. Lys35 is subject to N6-glutaryllysine; alternate. Lys35 is modified (N6-succinyllysine; alternate). A Glycyl lysine isopeptide (Lys-Gly) (interchain with G-Cter in ubiquitin); alternate cross-link involves residue Lys35. Glu36 carries the post-translational modification PolyADP-ribosyl glutamic acid. Ser37 bears the Phosphoserine; by AMPK mark. Lys44, Lys47, and Lys58 each carry N6-(2-hydroxyisobutyryl)lysine; alternate. Lys44 carries the N6-lactoyllysine; alternate modification. N6-glutaryllysine; alternate is present on residues Lys44 and Lys47. N6-methyllysine; alternate is present on Lys47. The residue at position 58 (Lys58) is an N6,N6-dimethyllysine; alternate. Arg80 carries the post-translational modification Dimethylated arginine. Lys86 carries the post-translational modification N6-(2-hydroxyisobutyryl)lysine; alternate. At Lys86 the chain carries N6-acetyllysine; alternate. Lys86 is subject to N6-lactoyllysine; alternate. Lys86 bears the N6,N6,N6-trimethyllysine; alternate mark. Residues Arg87 and Arg93 each carry the omega-N-methylarginine modification. The residue at position 109 (Lys109) is an N6-(2-hydroxyisobutyryl)lysine; alternate. An N6-lactoyllysine; alternate modification is found at Lys109. Lys109 is subject to N6-glutaryllysine; alternate. Lys109 carries the N6-methyllysine; alternate modification. O-linked (GlcNAc) serine glycosylation is present at Ser113. Residue Thr116 is modified to Phosphothreonine. N6-(2-hydroxyisobutyryl)lysine; alternate is present on residues Lys117 and Lys121. Residue Lys117 is modified to N6-(beta-hydroxybutyryl)lysine; alternate. An N6-lactoyllysine; alternate mark is found at Lys117 and Lys121. An N6-glutaryllysine; alternate mark is found at Lys117 and Lys121. N6-succinyllysine; alternate occurs at positions 117 and 121. Lys117 carries the post-translational modification N6-methylated lysine; alternate. A Glycyl lysine isopeptide (Lys-Gly) (interchain with G-Cter in ubiquitin); alternate cross-link involves residue Lys121.

This sequence belongs to the histone H2B family. As to quaternary structure, the nucleosome is a histone octamer containing two molecules each of H2A, H2B, H3 and H4 assembled in one H3-H4 heterotetramer and two H2A-H2B heterodimers. The octamer wraps approximately 147 bp of DNA. In terms of processing, monoubiquitination at Lys-35 (H2BK34Ub) by the MSL1/MSL2 dimer is required for histone H3 'Lys-4' (H3K4me) and 'Lys-79' (H3K79me) methylation and transcription activation at specific gene loci, such as HOXA9 and MEIS1 loci. Similarly, monoubiquitination at Lys-121 (H2BK120Ub) by the RNF20/40 complex gives a specific tag for epigenetic transcriptional activation and is also prerequisite for histone H3 'Lys-4' and 'Lys-79' methylation. It also functions cooperatively with the FACT dimer to stimulate elongation by RNA polymerase II. H2BK120Ub also acts as a regulator of mRNA splicing: deubiquitination by USP49 is required for efficient cotranscriptional splicing of a large set of exons. Phosphorylated on Ser-15 (H2BS14ph) by STK4/MST1 during apoptosis; which facilitates apoptotic chromatin condensation. Also phosphorylated on Ser-15 in response to DNA double strand breaks (DSBs), and in correlation with somatic hypermutation and immunoglobulin class-switch recombination. Phosphorylation at Ser-37 (H2BS36ph) by AMPK in response to stress promotes transcription. Post-translationally, ADP-ribosylated by PARP1 or PARP2 on Ser-7 (H2BS6ADPr) in response to DNA damage. H2BS6ADPr promotes recruitment of CHD1L. Mono-ADP-ribosylated on Glu-3 (H2BE2ADPr) by PARP3 in response to single-strand breaks. Poly ADP-ribosylation on Glu-36 (H2BE35ADPr) by PARP1 regulates adipogenesis: it inhibits phosphorylation at Ser-37 (H2BS36ph), thereby blocking expression of pro-adipogenetic genes. In terms of processing, crotonylation (Kcr) is specifically present in male germ cells and marks testis-specific genes in post-meiotic cells, including X-linked genes that escape sex chromosome inactivation in haploid cells. Crotonylation marks active promoters and enhancers and confers resistance to transcriptional repressors. It is also associated with post-meiotically activated genes on autosomes. GlcNAcylation at Ser-113 promotes monoubiquitination of Lys-121. It fluctuates in response to extracellular glucose, and associates with transcribed genes. Post-translationally, lactylated in macrophages by EP300/P300 by using lactoyl-CoA directly derived from endogenous or exogenous lactate, leading to stimulates gene transcription.

The protein resides in the nucleus. It localises to the chromosome. In terms of biological role, core component of nucleosome. Nucleosomes wrap and compact DNA into chromatin, limiting DNA accessibility to the cellular machineries which require DNA as a template. Histones thereby play a central role in transcription regulation, DNA repair, DNA replication and chromosomal stability. DNA accessibility is regulated via a complex set of post-translational modifications of histones, also called histone code, and nucleosome remodeling. Functionally, has broad antibacterial activity. May contribute to the formation of the functional antimicrobial barrier of the colonic epithelium, and to the bactericidal activity of amniotic fluid. This chain is Histone H2B type 2-E, found in Pongo abelii (Sumatran orangutan).